A 261-amino-acid polypeptide reads, in one-letter code: Ubiquinone biosynthesis O-methyltransferase (261 aa).

Positions 1–22 (MTMQVDPSANSSAASSAAPGTT) are disordered. A compositionally biased stretch (low complexity) spans 8 to 18 (SANSSAASSAA). S-adenosyl-L-methionine contacts are provided by arginine 55, glycine 86, aspartate 107, and methionine 149.

This sequence belongs to the methyltransferase superfamily. UbiG/COQ3 family.

It carries out the reaction a 3-demethylubiquinol + S-adenosyl-L-methionine = a ubiquinol + S-adenosyl-L-homocysteine + H(+). The catalysed reaction is a 3-(all-trans-polyprenyl)benzene-1,2-diol + S-adenosyl-L-methionine = a 2-methoxy-6-(all-trans-polyprenyl)phenol + S-adenosyl-L-homocysteine + H(+). It participates in cofactor biosynthesis; ubiquinone biosynthesis. In terms of biological role, O-methyltransferase that catalyzes the 2 O-methylation steps in the ubiquinone biosynthetic pathway. The protein is Ubiquinone biosynthesis O-methyltransferase of Nitrobacter winogradskyi (strain ATCC 25391 / DSM 10237 / CIP 104748 / NCIMB 11846 / Nb-255).